The chain runs to 120 residues: Glycine cleavage system H protein (120 aa).

The 83-residue stretch at Val-17 to Lys-99 folds into the Lipoyl-binding domain. Residue Lys-58 is modified to N6-lipoyllysine.

This sequence belongs to the GcvH family. The glycine cleavage system is composed of four proteins: P, T, L and H. Requires (R)-lipoate as cofactor.

Its function is as follows. The glycine cleavage system catalyzes the degradation of glycine. The H protein shuttles the methylamine group of glycine from the P protein to the T protein. This is Glycine cleavage system H protein from Methylorubrum populi (strain ATCC BAA-705 / NCIMB 13946 / BJ001) (Methylobacterium populi).